The sequence spans 176 residues: NADH-quinone oxidoreductase subunit B 1 (176 aa).

[4Fe-4S] cluster-binding residues include C55, C56, C120, and C150.

The protein belongs to the complex I 20 kDa subunit family. In terms of assembly, NDH-1 is composed of 14 different subunits. Subunits NuoB, C, D, E, F, and G constitute the peripheral sector of the complex. The cofactor is [4Fe-4S] cluster.

The protein localises to the cell inner membrane. It catalyses the reaction a quinone + NADH + 5 H(+)(in) = a quinol + NAD(+) + 4 H(+)(out). In terms of biological role, NDH-1 shuttles electrons from NADH, via FMN and iron-sulfur (Fe-S) centers, to quinones in the respiratory chain. Couples the redox reaction to proton translocation (for every two electrons transferred, four hydrogen ions are translocated across the cytoplasmic membrane), and thus conserves the redox energy in a proton gradient. In Cereibacter sphaeroides (strain ATCC 17029 / ATH 2.4.9) (Rhodobacter sphaeroides), this protein is NADH-quinone oxidoreductase subunit B 1.